Here is a 505-residue protein sequence, read N- to C-terminus: MRADSGAQGSAAQDIMINPLDSYNIRVVTPTSCDKYPGRYTSPYSAHRKHHARNVARKLGASSGLIFLSGQPTINLRDSDQSRPFRQRRYFYYLSGVDEPDCSLTYDIEQDLLSLYVPDFDLHRAIWMGPTLSREDAQDRYDVDHVRYHASLKYELQAWLDERKQGSELYLIHDSEKPEHLPKDLPLNLEQLRPAMDTARGVKDEYEIRMIRQANKVSGLAHRRILESIQSMSNESQIEGSFLNTCISHGARNQAYQIIAASGPNAAVLHYDRNNETLNKKPLVCLDAGAEWNCYASDVTRTFPLTGEWPSDYVRDIYKLVERMQDECIRLIRKGTRYLSLHNLAHDIAIEGLLALGVFKNGTIHELRQSGVSKVFFPHGLGHHVGLEVHDVSERSIMAIQRSDELQYRPILNSTCLPPCTLSAPLLEEGMVVTVEPGLYFSPLAMANARHQPYARYIDFDVAEKYVHIGGVRIEDDILVTATGYENLTTAPKGEEMLAIIRGSA.

Mn(2+)-binding residues include aspartate 287, aspartate 298, glutamate 436, and glutamate 475.

Belongs to the peptidase M24B family. The cofactor is Mn(2+).

It carries out the reaction Release of any N-terminal amino acid, including proline, that is linked to proline, even from a dipeptide or tripeptide.. Its function is as follows. Catalyzes the removal of a penultimate prolyl residue from the N-termini of peptides. This is Probable Xaa-Pro aminopeptidase Pc16g13390 from Penicillium rubens (strain ATCC 28089 / DSM 1075 / NRRL 1951 / Wisconsin 54-1255) (Penicillium chrysogenum).